A 554-amino-acid chain; its full sequence is Estrogen receptor beta (554 aa).

Positions 25-173 are modulating; that stretch reads TEIKNSPAGV…NPGSKKDAHF (149 aa). 2 NR C4-type zinc fingers span residues 174–194 and 210–234; these read CAVC…CEGC and CPAT…LRKC. Residues 174–239 constitute a DNA-binding region (nuclear receptor); it reads CAVCSDYASG…RLRKCYEVGM (66 aa). The 233-residue stretch at 289-521 folds into the NR LBD domain; sequence SPEQFVLTLL…DLLLEMLNAH (233 aa). A disordered region spans residues 529–554; sequence PLATHPEFGPLEQMEPGESLRKGEPQ.

The protein belongs to the nuclear hormone receptor family. NR3 subfamily. As to quaternary structure, binds DNA as a homodimer. Can form a heterodimer with ER-alpha. Brain, pituitary, skeletal muscle, liver, adrenal, kidney, intestine and ovary.

Its subcellular location is the nucleus. Functionally, binds estrogens with an affinity similar to that of ER-alpha, and activates expression of reporter genes containing estrogen response elements (ERE) in an estrogen-dependent manner. Locally synthesized estrogens may act via ER beta, in addition to ER alpha, to mediate seasonal or developmental effects on nearby song nuclei. This is Estrogen receptor beta (ESR2) from Sturnus vulgaris (Starling).